The primary structure comprises 377 residues: Presenilin-associated rhomboid-like protein, mitochondrial (377 aa).

The N-terminal 52 residues, 1–52, are a transit peptide targeting the mitochondrion; sequence MAWRGWAQRGWGCGQAWTLPVCGGSYEELTAALAPSRLLRRRFNFFIQQKCG. Residues 53 to 99 are Mitochondrial matrix-facing; the sequence is FRKAPRKVEPRRSDTSSEAYKRSALIPPVEETAFYPSPYPIRTLVKP. Phosphoserine occurs at positions 65 and 68. A helical transmembrane segment spans residues 100–119; the sequence is LFFTVGFTGCAFGSAAIWQY. Residues 120–165 are Mitochondrial intermembrane-facing; it reads ESLKSKVQSYFDGIKADWLDSIRPQKEGDFRKEINKWWNNLSDGQR. The helical transmembrane segment at 166–185 threads the bilayer; sequence TVTGIIAANVFVFCLWRVPS. At 186-205 the chain is on the mitochondrial matrix side; it reads LQRTMIRYFTSNPASKVLCS. Residues 206-228 traverse the membrane as a helical segment; it reads PMLLSTFSHFSLFHMAANMYVLW. At 229–242 the chain is on the mitochondrial intermembrane side; it reads SFSSSIVNILGQEQ. A helical transmembrane segment spans residues 243–260; that stretch reads FMAVYLSAGVISTFVSYV. Residues 261 to 270 are Mitochondrial matrix-facing; that stretch reads CKVATGRYGP. A helical transmembrane segment spans residues 271 to 287; sequence SLGASGAIMTVLAAVCT. S275 (nucleophile) is an active-site residue. Topologically, residues 288-293 are mitochondrial intermembrane; sequence KIPEGR. The helical transmembrane segment at 294–316 threads the bilayer; sequence LAIIFLPMFTFTAGNALKAIIAM. Residues 317-330 are Mitochondrial matrix-facing; the sequence is DTAGMILGWKFFDH. A helical membrane pass occupies residues 331–352; it reads AAHLGGALFGIWYITYGHELIW. The active site involves H333. Residues 353-377 lie on the Mitochondrial intermembrane side of the membrane; that stretch reads KNREPLVKIWHEMRTNSPKKGGGSK.

The protein belongs to the peptidase S54 family. Interacts with PSEN1 and PSEN2. Binds OPA1. Post-translationally, P-beta is proteolytically processed (beta-cleavage) in a PARL-dependent manner.

The protein resides in the mitochondrion inner membrane. The protein localises to the nucleus. The enzyme catalyses Cleaves type-1 transmembrane domains using a catalytic dyad composed of serine and histidine that are contributed by different transmembrane domains.. In terms of biological role, required for the control of apoptosis during postnatal growth. Essential for proteolytic processing of an antiapoptotic form of OPA1 which prevents the release of mitochondrial cytochrome c in response to intrinsic apoptotic signals. Required for the maturation of PINK1 into its 52kDa mature form after its cleavage by mitochondrial-processing peptidase (MPP). Promotes cleavage of serine/threonine-protein phosphatase PGAM5 in damaged mitochondria in response to loss of mitochondrial membrane potential. Mediates differential cleavage of PINK1 and PGAM5 depending on the health status of mitochondria, disassociating from PINK1 and associating with PGAM5 in response to mitochondrial membrane potential loss. Required for processing of CLPB into a form with higher protein disaggregase activity by removing an autoinhibitory N-terminal peptide. Promotes processing of DIABLO/SMAC in the mitochondrion which is required for DIABLO apoptotic activity. Also required for cleavage of STARD7 and TTC19. Promotes changes in mitochondria morphology regulated by phosphorylation of P-beta domain. In Bos taurus (Bovine), this protein is Presenilin-associated rhomboid-like protein, mitochondrial (PARL).